We begin with the raw amino-acid sequence, 332 residues long: Glycerol-3-phosphate dehydrogenase [NAD(P)+] (332 aa).

NADPH-binding residues include Ser11, Trp12, Lys32, and Lys106. Residues Lys106, Gly137, and Ser139 each contribute to the sn-glycerol 3-phosphate site. Ala141 is an NADPH binding site. Sn-glycerol 3-phosphate is bound by residues Lys192, Asp245, Ser255, Arg256, and Asn257. Catalysis depends on Lys192, which acts as the Proton acceptor. Arg256 is an NADPH binding site. Positions 280 and 282 each coordinate NADPH.

It belongs to the NAD-dependent glycerol-3-phosphate dehydrogenase family.

The protein resides in the cytoplasm. It carries out the reaction sn-glycerol 3-phosphate + NAD(+) = dihydroxyacetone phosphate + NADH + H(+). The catalysed reaction is sn-glycerol 3-phosphate + NADP(+) = dihydroxyacetone phosphate + NADPH + H(+). The protein operates within membrane lipid metabolism; glycerophospholipid metabolism. Its function is as follows. Catalyzes the reduction of the glycolytic intermediate dihydroxyacetone phosphate (DHAP) to sn-glycerol 3-phosphate (G3P), the key precursor for phospholipid synthesis. The chain is Glycerol-3-phosphate dehydrogenase [NAD(P)+] from Macrococcus caseolyticus (strain JCSC5402) (Macrococcoides caseolyticum).